A 278-amino-acid polypeptide reads, in one-letter code: Elongation factor Ts (278 aa).

The interval 80 to 83 (TDFV) is involved in Mg(2+) ion dislocation from EF-Tu.

The protein belongs to the EF-Ts family.

The protein localises to the cytoplasm. Its function is as follows. Associates with the EF-Tu.GDP complex and induces the exchange of GDP to GTP. It remains bound to the aminoacyl-tRNA.EF-Tu.GTP complex up to the GTP hydrolysis stage on the ribosome. This is Elongation factor Ts from Renibacterium salmoninarum (strain ATCC 33209 / DSM 20767 / JCM 11484 / NBRC 15589 / NCIMB 2235).